Consider the following 707-residue polypeptide: Signal transducer and activator of transcription A (707 aa).

Over residues 70–89 the composition is skewed to polar residues; the sequence is LNQSDQFNLGRSNNLTPRTN. A disordered region spans residues 70–246; sequence LNQSDQFNLG…GNPNLSSPQP (177 aa). A compositionally biased stretch (low complexity) spans 90 to 111; it reads QLQQLQQQQQQQQQPQQQQQQQ. Residues 112-121 show a composition bias toward polar residues; it reads TYGTQSPIHM. Residues 142 to 238 are compositionally biased toward low complexity; sequence QQSYNNNNSN…QQQQQQQQGN (97 aa). The stretch at 242–356 forms a coiled coil; sequence SSPQPILDTI…IQSILNPQHS (115 aa). The DNA-binding element occupies 443-487; that stretch reads KFLAGTRKCSVNLKFGVNIRDLDNVTTTVESDASNPFVVITNECQ. Residues 583 to 686 form the SH2 domain; sequence WQEGIIYGYM…FLKLHKDTAL (104 aa). Residue Tyr702 is modified to Phosphotyrosine.

This sequence belongs to the transcription factor STAT family. Monomer, in the absence of tyrosine phosphorylation. Homodimer, or heterodimer with another family member, when tyrosine phosphorylated. In terms of processing, tyrosine phosphorylated in response to cAMP. Not tyrosine phosphorylated in growing cells. Tyrosine phosphorylation is first detected at the tight mound stage, continues throughout the slug stage and early culmination, and starts to decrease at mid-culmination. Barely detectable in fruiting bodies.

The protein localises to the cytoplasm. Its subcellular location is the nucleus. Its function is as follows. Transcription factor that binds to 5'-TTGAATTGA-3' elements in the promoter region of target genes. Functions as a repressor of the ecmB gene. Regulates the differentiation of prestalk cells during development. The sequence is that of Signal transducer and activator of transcription A (dstA) from Dictyostelium discoideum (Social amoeba).